The sequence spans 603 residues: Probable potassium transport system protein Kup (603 aa).

A run of 12 helical transmembrane segments spans residues G15–L35, I43–A63, V94–I114, N135–V155, I163–I183, G209–L229, A244–I264, I283–M303, I336–F356, A365–F385, N390–S410, and I415–I435.

The protein belongs to the HAK/KUP transporter (TC 2.A.72) family.

The protein resides in the cell membrane. The enzyme catalyses K(+)(in) + H(+)(in) = K(+)(out) + H(+)(out). Functionally, transport of potassium into the cell. Likely operates as a K(+):H(+) symporter. The polypeptide is Probable potassium transport system protein Kup (Methanosarcina barkeri (strain Fusaro / DSM 804)).